A 481-amino-acid polypeptide reads, in one-letter code: Glutamate--tRNA ligase (481 aa).

The 'HIGH' region signature appears at Pro11–Asn21. Positions Lys255–Arg259 match the 'KMSKS' region motif. Lys258 serves as a coordination point for ATP.

This sequence belongs to the class-I aminoacyl-tRNA synthetase family. Glutamate--tRNA ligase type 1 subfamily. As to quaternary structure, monomer.

Its subcellular location is the cytoplasm. The enzyme catalyses tRNA(Glu) + L-glutamate + ATP = L-glutamyl-tRNA(Glu) + AMP + diphosphate. Its function is as follows. Catalyzes the attachment of glutamate to tRNA(Glu) in a two-step reaction: glutamate is first activated by ATP to form Glu-AMP and then transferred to the acceptor end of tRNA(Glu). This chain is Glutamate--tRNA ligase, found in Streptococcus pyogenes serotype M4 (strain MGAS10750).